A 109-amino-acid chain; its full sequence is Biphenyl dioxygenase ferredoxin subunit (109 aa).

The 97-residue stretch at 4-100 (TKACSVDEVP…IRIEGRDVLV (97 aa)) folds into the Rieske domain. [2Fe-2S] cluster is bound by residues C43, H45, C63, and H66.

The protein belongs to the bacterial ring-hydroxylating dioxygenase ferredoxin component family. This dioxygenase system consists of four proteins: the two subunits of the hydroxylase component (BphA1 and BphA2), a ferredoxin (BphA3) and a ferredoxin reductase (BphA4).

Its function is as follows. This protein seems to be a 2Fe-2S ferredoxin. The protein is Biphenyl dioxygenase ferredoxin subunit (bphA3) of Pseudomonas sp. (strain KKS102).